Consider the following 219-residue polypeptide: Probable GTP-binding protein EngB (219 aa).

An EngB-type G domain is found at 33 to 217 (GPLEIAFAGR…RAAICETVGH (185 aa)). GTP-binding positions include 41–48 (GRSNVGKS), 68–72 (GRTQE), 95–98 (DMPG), 162–165 (TKTD), and 196–198 (TSS). Residues Ser-48 and Thr-70 each coordinate Mg(2+).

This sequence belongs to the TRAFAC class TrmE-Era-EngA-EngB-Septin-like GTPase superfamily. EngB GTPase family. Mg(2+) serves as cofactor.

In terms of biological role, necessary for normal cell division and for the maintenance of normal septation. In Allorhizobium ampelinum (strain ATCC BAA-846 / DSM 112012 / S4) (Agrobacterium vitis (strain S4)), this protein is Probable GTP-binding protein EngB.